The chain runs to 222 residues: Ribonuclease HII (222 aa).

One can recognise an RNase H type-2 domain in the interval 17–206 (DLVAGVDEVG…VRAAHEARAS (190 aa)). A divalent metal cation is bound by residues Asp-23, Glu-24, and Asp-115.

It belongs to the RNase HII family. Requires Mn(2+) as cofactor. It depends on Mg(2+) as a cofactor.

The protein localises to the cytoplasm. The catalysed reaction is Endonucleolytic cleavage to 5'-phosphomonoester.. Its function is as follows. Endonuclease that specifically degrades the RNA of RNA-DNA hybrids. The polypeptide is Ribonuclease HII (Pseudomonas savastanoi pv. phaseolicola (strain 1448A / Race 6) (Pseudomonas syringae pv. phaseolicola (strain 1448A / Race 6))).